A 228-amino-acid polypeptide reads, in one-letter code: Demethylmenaquinone methyltransferase (228 aa).

Residues T62, D80, 100 to 101, and S117 contribute to the S-adenosyl-L-methionine site; that span reads DA.

The protein belongs to the class I-like SAM-binding methyltransferase superfamily. MenG/UbiE family.

It carries out the reaction a 2-demethylmenaquinol + S-adenosyl-L-methionine = a menaquinol + S-adenosyl-L-homocysteine + H(+). The protein operates within quinol/quinone metabolism; menaquinone biosynthesis; menaquinol from 1,4-dihydroxy-2-naphthoate: step 2/2. Functionally, methyltransferase required for the conversion of demethylmenaquinol (DMKH2) to menaquinol (MKH2). The protein is Demethylmenaquinone methyltransferase of Mycolicibacterium gilvum (strain PYR-GCK) (Mycobacterium gilvum (strain PYR-GCK)).